Reading from the N-terminus, the 310-residue chain is tRNA-cytidine(32) 2-sulfurtransferase (310 aa).

Positions 48–53 (SGGKDS) match the PP-loop motif motif. C123, C126, and C214 together coordinate [4Fe-4S] cluster.

Belongs to the TtcA family. Homodimer. Mg(2+) is required as a cofactor. Requires [4Fe-4S] cluster as cofactor.

The protein resides in the cytoplasm. It catalyses the reaction cytidine(32) in tRNA + S-sulfanyl-L-cysteinyl-[cysteine desulfurase] + AH2 + ATP = 2-thiocytidine(32) in tRNA + L-cysteinyl-[cysteine desulfurase] + A + AMP + diphosphate + H(+). It functions in the pathway tRNA modification. Its function is as follows. Catalyzes the ATP-dependent 2-thiolation of cytidine in position 32 of tRNA, to form 2-thiocytidine (s(2)C32). The sulfur atoms are provided by the cysteine/cysteine desulfurase (IscS) system. The chain is tRNA-cytidine(32) 2-sulfurtransferase from Vibrio vulnificus (strain YJ016).